Consider the following 459-residue polypeptide: Cysteine--tRNA ligase (459 aa).

C27 is a binding site for Zn(2+). The short motif at 29 to 39 (VTVYDDCHIGH) is the 'HIGH' region element. Residues C208, H233, and E237 each coordinate Zn(2+). A 'KMSKS' region motif is present at residues 265-269 (KMSKS). K268 serves as a coordination point for ATP.

This sequence belongs to the class-I aminoacyl-tRNA synthetase family. In terms of assembly, monomer. Zn(2+) serves as cofactor.

The protein localises to the cytoplasm. The enzyme catalyses tRNA(Cys) + L-cysteine + ATP = L-cysteinyl-tRNA(Cys) + AMP + diphosphate. The polypeptide is Cysteine--tRNA ligase (Francisella tularensis subsp. mediasiatica (strain FSC147)).